Reading from the N-terminus, the 213-residue chain is uncharacterized protein (213 aa).

Residues G53, E74, and D97 each coordinate S-adenosyl-L-methionine.

It belongs to the methyltransferase superfamily. YrrT family.

In terms of biological role, could be a S-adenosyl-L-methionine-dependent methyltransferase. This is an uncharacterized protein from Bacillus subtilis (strain 168).